The following is a 641-amino-acid chain: Chaperone protein HtpG (641 aa).

Positions 1-348 are a; substrate-binding; that stretch reads MTTATEKQTL…SNDLSLNVSR (348 aa). Residues 349 to 565 form a b region; it reads EILQNDKAVE…AYDMGVQMRR (217 aa). The tract at residues 566 to 641 is c; it reads IMEAAGQALP…KLLLELSNAG (76 aa).

This sequence belongs to the heat shock protein 90 family. In terms of assembly, homodimer.

The protein resides in the cytoplasm. Molecular chaperone. Has ATPase activity. This Hahella chejuensis (strain KCTC 2396) protein is Chaperone protein HtpG.